The chain runs to 111 residues: Large ribosomal subunit protein uL22 (111 aa).

Belongs to the universal ribosomal protein uL22 family. As to quaternary structure, part of the 50S ribosomal subunit.

Its function is as follows. This protein binds specifically to 23S rRNA; its binding is stimulated by other ribosomal proteins, e.g. L4, L17, and L20. It is important during the early stages of 50S assembly. It makes multiple contacts with different domains of the 23S rRNA in the assembled 50S subunit and ribosome. The globular domain of the protein is located near the polypeptide exit tunnel on the outside of the subunit, while an extended beta-hairpin is found that lines the wall of the exit tunnel in the center of the 70S ribosome. The sequence is that of Large ribosomal subunit protein uL22 from Xanthomonas euvesicatoria pv. vesicatoria (strain 85-10) (Xanthomonas campestris pv. vesicatoria).